Reading from the N-terminus, the 218-residue chain is LHFPL tetraspan subfamily member 3 protein (218 aa).

The next 4 membrane-spanning stretches (helical) occupy residues 22 to 42 (IGVLWAIFTICFAIVNIVCFI), 96 to 116 (FFIGLSMTLIIGCIVSFGLFF), 126 to 146 (ICAWMQLCSAACLVLGCMIFP), and 177 to 197 (ILAIIGILDALILSFLAFVLG).

It belongs to the LHFP family.

The protein localises to the membrane. In Xenopus laevis (African clawed frog), this protein is LHFPL tetraspan subfamily member 3 protein.